The primary structure comprises 393 residues: Acetylornithine aminotransferase (393 aa).

Residues 100–101 (GA) and F133 each bind pyridoxal 5'-phosphate. R136 contributes to the N(2)-acetyl-L-ornithine binding site. Position 218–221 (218–221 (DEVQ)) interacts with pyridoxal 5'-phosphate. At K247 the chain carries N6-(pyridoxal phosphate)lysine. S274 is a binding site for N(2)-acetyl-L-ornithine. T275 lines the pyridoxal 5'-phosphate pocket.

Belongs to the class-III pyridoxal-phosphate-dependent aminotransferase family. ArgD subfamily. As to quaternary structure, homodimer. It depends on pyridoxal 5'-phosphate as a cofactor.

It is found in the cytoplasm. The enzyme catalyses N(2)-acetyl-L-ornithine + 2-oxoglutarate = N-acetyl-L-glutamate 5-semialdehyde + L-glutamate. Its pathway is amino-acid biosynthesis; L-arginine biosynthesis; N(2)-acetyl-L-ornithine from L-glutamate: step 4/4. The chain is Acetylornithine aminotransferase from Caldanaerobacter subterraneus subsp. tengcongensis (strain DSM 15242 / JCM 11007 / NBRC 100824 / MB4) (Thermoanaerobacter tengcongensis).